Here is a 255-residue protein sequence, read N- to C-terminus: Pyridoxine 5'-phosphate synthase (255 aa).

The 3-amino-2-oxopropyl phosphate site is built by N8 and R19. Residue H44 is the Proton acceptor of the active site. Residues R46 and H51 each coordinate 1-deoxy-D-xylulose 5-phosphate. E74 functions as the Proton acceptor in the catalytic mechanism. T111 contributes to the 1-deoxy-D-xylulose 5-phosphate binding site. H202 functions as the Proton donor in the catalytic mechanism. 3-amino-2-oxopropyl phosphate-binding positions include D203 and 225–226 (GH).

Belongs to the PNP synthase family. As to quaternary structure, homooctamer; tetramer of dimers.

It is found in the cytoplasm. The enzyme catalyses 3-amino-2-oxopropyl phosphate + 1-deoxy-D-xylulose 5-phosphate = pyridoxine 5'-phosphate + phosphate + 2 H2O + H(+). The protein operates within cofactor biosynthesis; pyridoxine 5'-phosphate biosynthesis; pyridoxine 5'-phosphate from D-erythrose 4-phosphate: step 5/5. In terms of biological role, catalyzes the complicated ring closure reaction between the two acyclic compounds 1-deoxy-D-xylulose-5-phosphate (DXP) and 3-amino-2-oxopropyl phosphate (1-amino-acetone-3-phosphate or AAP) to form pyridoxine 5'-phosphate (PNP) and inorganic phosphate. In Xanthomonas oryzae pv. oryzae (strain PXO99A), this protein is Pyridoxine 5'-phosphate synthase.